We begin with the raw amino-acid sequence, 1077 residues long: Adenylate cyclase type 4 (1077 aa).

The Cytoplasmic portion of the chain corresponds to 1-28 (MARLFSPRPPPSEDLFYETYYSLSQQYP). A run of 6 helical transmembrane segments spans residues 29-50 (LLIL…VAWA), 61-80 (FLTT…GLAS), 94-117 (GLIW…VSAW), 120-138 (VSFF…PLGM), 141-162 (AAAA…YLGW), and 170-190 (LLPQ…VGAY). The Cytoplasmic portion of the chain corresponds to 191-582 (HKALMERALR…YRLSALPAFK (392 aa)). Mg(2+) is bound by residues Asp-278, Ile-279, and Asp-322. ATP is bound by residues 278-283 (DIVGFT), 320-322 (LGD), and Arg-366. The segment at 503-524 (TSTPLPEKAFSPQWSLDRSRTP) is disordered. At Ser-517 the chain carries Phosphoserine. Thr-533 carries the post-translational modification Phosphothreonine. 3 helical membrane-spanning segments follow: residues 583-604 (YYAA…LVTT), 608-630 (ALII…CFSE), and 661-684 (VALG…FLPV). Over 685 to 717 (SSDCLFLASNVSSVTFNASWEMPGSLPLISIPL) the chain is Extracellular. Residues Asn-694 and Asn-701 are each glycosylated (N-linked (GlcNAc...) asparagine). Transmembrane regions (helical) follow at residues 718-738 (ISIP…SLFL), 746-766 (LLLL…SHAW), and 793-809 (MGAI…LVLA). At 810–1077 (RQNEYYCRLD…LTRTGSPSAS (268 aa)) the chain is on the cytoplasmic side. Residues Lys-927, 1007 to 1009 (DIW), 1014 to 1018 (NVASR), and Lys-1054 contribute to the ATP site.

Belongs to the adenylyl cyclase class-4/guanylyl cyclase family. The cofactor is Mg(2+). It depends on Mn(2+) as a cofactor.

The protein resides in the cell membrane. It localises to the cytoplasm. The catalysed reaction is ATP = 3',5'-cyclic AMP + diphosphate. Activated by forskolin. Insensitive to calcium/calmodulin. Stimulated by GNAS and by the G-protein beta and gamma subunit complex. Its function is as follows. Catalyzes the formation of the signaling molecule cAMP in response to G-protein signaling. This is Adenylate cyclase type 4 (Adcy4) from Mus musculus (Mouse).